We begin with the raw amino-acid sequence, 375 residues long: Probable pectin lyase D (375 aa).

The N-terminal stretch at 1-19 is a signal peptide; that stretch reads MKYAAVLTTVAALASRALG. Cystine bridges form between Cys82-Cys101 and Cys91-Cys225. Asn128 is a glycosylation site (N-linked (GlcNAc...) asparagine). The active site involves Arg255. Cys321 and Cys329 are joined by a disulfide.

This sequence belongs to the polysaccharide lyase 1 family.

The protein localises to the secreted. It catalyses the reaction Eliminative cleavage of (1-&gt;4)-alpha-D-galacturonan methyl ester to give oligosaccharides with 4-deoxy-6-O-methyl-alpha-D-galact-4-enuronosyl groups at their non-reducing ends.. Pectinolytic enzymes consist of four classes of enzymes: pectin lyase, polygalacturonase, pectin methylesterase and rhamnogalacturonase. Among pectinolytic enzymes, pectin lyase is the most important in depolymerization of pectin, since it cleaves internal glycosidic bonds of highly methylated pectins. This chain is Probable pectin lyase D (pelD), found in Aspergillus flavus (strain ATCC 200026 / FGSC A1120 / IAM 13836 / NRRL 3357 / JCM 12722 / SRRC 167).